A 277-amino-acid polypeptide reads, in one-letter code: Ribonuclease HII (277 aa).

One can recognise an RNase H type-2 domain in the interval 72–260 (EYIAGIDEAG…IKEMIEMKKE (189 aa)). Residues D78, E79, and D170 each contribute to the a divalent metal cation site.

It belongs to the RNase HII family. Requires Mn(2+) as cofactor. It depends on Mg(2+) as a cofactor.

Its subcellular location is the cytoplasm. The catalysed reaction is Endonucleolytic cleavage to 5'-phosphomonoester.. Its function is as follows. Endonuclease that specifically degrades the RNA of RNA-DNA hybrids. This Geobacillus sp. (strain WCH70) protein is Ribonuclease HII.